The sequence spans 642 residues: Threonine--tRNA ligase (642 aa).

A TGS domain is found at 1–61 (MPVIRFYDGS…REDAFIEFVD (61 aa)). The interval 243 to 534 (DHRKIGKFLQ…LIEECSGNLP (292 aa)) is catalytic. Residues C334, H385, and H511 each coordinate Zn(2+).

It belongs to the class-II aminoacyl-tRNA synthetase family. Homodimer. Requires Zn(2+) as cofactor.

It localises to the cytoplasm. The enzyme catalyses tRNA(Thr) + L-threonine + ATP = L-threonyl-tRNA(Thr) + AMP + diphosphate + H(+). Functionally, catalyzes the attachment of threonine to tRNA(Thr) in a two-step reaction: L-threonine is first activated by ATP to form Thr-AMP and then transferred to the acceptor end of tRNA(Thr). Also edits incorrectly charged L-seryl-tRNA(Thr). This is Threonine--tRNA ligase from Buchnera aphidicola subsp. Acyrthosiphon pisum (strain APS) (Acyrthosiphon pisum symbiotic bacterium).